The chain runs to 155 residues: Small ribosomal subunit protein uS7c (155 aa).

The protein belongs to the universal ribosomal protein uS7 family. Part of the 30S ribosomal subunit.

It localises to the plastid. The protein localises to the chloroplast. Its function is as follows. One of the primary rRNA binding proteins, it binds directly to 16S rRNA where it nucleates assembly of the head domain of the 30S subunit. This is Small ribosomal subunit protein uS7c from Beta vulgaris (Sugar beet).